Here is an 872-residue protein sequence, read N- to C-terminus: Alanine--tRNA ligase (872 aa).

H563, H567, C665, and H669 together coordinate Zn(2+).

This sequence belongs to the class-II aminoacyl-tRNA synthetase family. It depends on Zn(2+) as a cofactor.

It localises to the cytoplasm. It carries out the reaction tRNA(Ala) + L-alanine + ATP = L-alanyl-tRNA(Ala) + AMP + diphosphate. Its function is as follows. Catalyzes the attachment of alanine to tRNA(Ala) in a two-step reaction: alanine is first activated by ATP to form Ala-AMP and then transferred to the acceptor end of tRNA(Ala). Also edits incorrectly charged Ser-tRNA(Ala) and Gly-tRNA(Ala) via its editing domain. This Bacteroides fragilis (strain YCH46) protein is Alanine--tRNA ligase.